Consider the following 395-residue polypeptide: Polar tube protein 1 (395 aa).

The N-terminal stretch at 1–22 is a signal peptide; the sequence is MKGISKILSASIALMKLENVYS. Disordered regions lie at residues 59–95 and 111–133; these read CASG…APAE and PGTT…QQPL. The segment covering 68–80 has biased composition (low complexity); the sequence is SPSPAAPTSPVTP. The span at 81–91 shows a compositional bias: polar residues; that stretch reads GKTSENETSPS. Asn86 carries an N-linked (GlcNAc...) asparagine glycan. Residues 111–128 are compositionally biased toward low complexity; that stretch reads PGTTSGTTPGSGPCETPE. The N-linked (GlcNAc...) asparagine glycan is linked to Asn173. Tandem repeats lie at residues 179-204, 205-230, 231-256, and 257-282. Residues 179–282 form a 4 X 26 AA approximate tandem repeats region; that stretch reads PGQQQILSGT…LCQDQGMPGT (104 aa). A disordered region spans residues 277 to 300; the sequence is QGMPGTSGVPGQQGQSSGQCCAPQ. The span at 280–300 shows a compositional bias: low complexity; sequence PGTSGVPGQQGQSSGQCCAPQ. Asn311 carries N-linked (GlcNAc...) asparagine glycosylation.

Interacts with PTP2 and PTP3.

The protein resides in the spore polar tube. Involved with PTP2 and PTP3 in the formation of the polar tube through which the infectious agent is passed on to the host cell. Accounts for at least 70 percent of the mass of the polar tube. The protein is Polar tube protein 1 (PTP1) of Encephalitozoon cuniculi (strain GB-M1) (Microsporidian parasite).